The sequence spans 285 residues: Putative hydrolase DDAH2 (285 aa).

Catalysis depends on histidine 171, which acts as the Proton donor. The Nucleophile role is filled by cysteine 276.

This sequence belongs to the DDAH family. Phosphorylated by TBK1. Phosphorylation inhibits the translocation into the mitochondrion upon Sendai viral infection.

Its subcellular location is the cytoplasm. It localises to the mitochondrion. In terms of biological role, putative hydrolase with unknown substrate. Does not hydrolyze N(G),N(G)-dimethyl-L-arginine (ADMA) which acts as an inhibitor of NOS. In endothelial cells, induces expression of vascular endothelial growth factor (VEGF) via phosphorylation of the transcription factor SP1 by PKA in a process that is independent of NO and NO synthase. Similarly, enhances pancreatic insulin secretion through SP1-mediated transcriptional up-regulation of secretagogin/SCGN, an insulin vesicle docking protein. Upon viral infection, relocates to mitochondria where it promotes mitochondrial fission through activation of DNM1L leading to the inhibition of innate response activation mediated by MAVS. This is Putative hydrolase DDAH2 (DDAH2) from Bos taurus (Bovine).